We begin with the raw amino-acid sequence, 561 residues long: MADTDSRPSNFIRQIIDKDLASGKHATVHTRFPPEPNGYLHIGHAKSIVLNFGIAEDYNGTCNLRFDDTNPLKEKVDYVNSIKKDVEWLGYHWEGEPRYSSNYFDQLHGFAVELIEKGLAYVDFSSQDKMREMRGTLKEPGVNSPYRDTSVEENLKHFADMTAGKHEEGTAALRAKIDMSSPFMCMRDPVIYRVRFVHHHQTGDKWCVYPMYDFTHCISDALEGITHSLCTLEFQDNRRLYDWVLDNISIDCHPQQIEFSRLNLQYTVMSKRIINTLVDENKVSGWDDPRIASIAGLRRRGYTPDSVREFCRRIGVTKMDNQVEMSMLEACIRDDLNVNAPRAMAVMDPVKIVIENYPEGEQELLDAPNHPNDPEMGSRQVTFSREIWIEREDFRESANKKFKRLVLDKEVRLRNAYVIRADRIETDDNGEIQTIYCHYDADTLGKDPADGRKVKGVIHWVSAETAKAAEFRVYDRLFQVPNPAAEEDLFSTLNPESLVIKKGFVEANLASAKLGENFQFERLGYYCLDQDAETEGRLIFNQTVGLRDSWAKIEQEQTTGS.

The 'HIGH' region motif lies at 34-44; it reads PEPNGYLHIGH. Residues 35-37 and 41-47 contribute to the ATP site; these read EPN and HIGHAKS. The L-glutamine site is built by aspartate 67 and tyrosine 212. Residues threonine 231, 261–262, and 269–271 contribute to the ATP site; these read RL and MSK. A 'KMSKS' region motif is present at residues 268–272; it reads VMSKR.

It belongs to the class-I aminoacyl-tRNA synthetase family. Monomer.

It is found in the cytoplasm. The catalysed reaction is tRNA(Gln) + L-glutamine + ATP = L-glutaminyl-tRNA(Gln) + AMP + diphosphate. In Idiomarina loihiensis (strain ATCC BAA-735 / DSM 15497 / L2-TR), this protein is Glutamine--tRNA ligase.